The following is a 370-amino-acid chain: Queuine tRNA-ribosyltransferase (370 aa).

Residue Asp-93 is the Proton acceptor of the active site. Substrate-binding positions include 93-97 (DSGGF), Asp-147, Gln-189, and Gly-216. Residues 247–253 (GVGSPDC) form an RNA binding region. Catalysis depends on Asp-266, which acts as the Nucleophile. Residues 271–275 (TRIAR) form an RNA binding; important for wobble base 34 recognition region. Cys-304, Cys-306, Cys-309, and His-335 together coordinate Zn(2+).

The protein belongs to the queuine tRNA-ribosyltransferase family. In terms of assembly, homodimer. Within each dimer, one monomer is responsible for RNA recognition and catalysis, while the other monomer binds to the replacement base PreQ1. The cofactor is Zn(2+).

It catalyses the reaction 7-aminomethyl-7-carbaguanine + guanosine(34) in tRNA = 7-aminomethyl-7-carbaguanosine(34) in tRNA + guanine. It functions in the pathway tRNA modification; tRNA-queuosine biosynthesis. Functionally, catalyzes the base-exchange of a guanine (G) residue with the queuine precursor 7-aminomethyl-7-deazaguanine (PreQ1) at position 34 (anticodon wobble position) in tRNAs with GU(N) anticodons (tRNA-Asp, -Asn, -His and -Tyr). Catalysis occurs through a double-displacement mechanism. The nucleophile active site attacks the C1' of nucleotide 34 to detach the guanine base from the RNA, forming a covalent enzyme-RNA intermediate. The proton acceptor active site deprotonates the incoming PreQ1, allowing a nucleophilic attack on the C1' of the ribose to form the product. After dissociation, two additional enzymatic reactions on the tRNA convert PreQ1 to queuine (Q), resulting in the hypermodified nucleoside queuosine (7-(((4,5-cis-dihydroxy-2-cyclopenten-1-yl)amino)methyl)-7-deazaguanosine). The protein is Queuine tRNA-ribosyltransferase of Pelotomaculum thermopropionicum (strain DSM 13744 / JCM 10971 / SI).